The following is a 222-amino-acid chain: MNIFKKKTTPKDALRTSKREMAVATRGIEREITSLQLEEKRLVAEIKKTAKTGNEAATKILARQLVRLRQQITNLQGSRAQIRGVTTHTQALYASTSISSGMKGATKAMVAMNKQMAPTKQAKVIKDFQKQSAQLDMTIEMMSEAIDETLDKDEAEEETEDLTNQVLDEIGVGVASQLSSAPKGRIATKTAAPPASTAATNKNSESSEVDELEKRLASLRRI.

2 coiled-coil regions span residues 26 to 83 and 143 to 222; these read RGIE…AQIR and SEAI…LRRI. The tract at residues 179-222 is disordered; sequence SSAPKGRIATKTAAPPASTAATNKNSESSEVDELEKRLASLRRI. Positions 187–203 are enriched in low complexity; sequence ATKTAAPPASTAATNKN.

It belongs to the SNF7 family. Component of the endosomal sorting required for transport complex III (ESCRT-III), composed at least of VPS2, VPS20, VPS24 and VPS32. Interacts with CHMP1A, CHMP1B and VPS60-1.

It localises to the endosome. Functionally, component of the ESCRT-III complex, which is required for multivesicular bodies (MVBs) formation and sorting of endosomal cargo proteins into MVBs. The ESCRT-III complex is probably involved in the concentration of MVB cargo. This chain is Vacuolar protein sorting-associated protein 2 homolog 2 (VPS2.2), found in Arabidopsis thaliana (Mouse-ear cress).